A 231-amino-acid polypeptide reads, in one-letter code: Small ribosomal subunit protein uS2c (231 aa).

This sequence belongs to the universal ribosomal protein uS2 family.

The protein resides in the plastid. It is found in the chloroplast. The polypeptide is Small ribosomal subunit protein uS2c (rps2) (Gracilaria tenuistipitata var. liui (Red alga)).